Here is a 992-residue protein sequence, read N- to C-terminus: UvrABC system protein A (992 aa).

Residues 1–11 show a composition bias toward polar residues; it reads MPKNSSTTVSS. The interval 1 to 30 is disordered; the sequence is MPKNSSTTVSSAVEAHAGGLASGPGGARSG. 62–69 is a binding site for ATP; sequence GLSGSGKS. Residues 302–330 form a C4-type; atypical zinc finger; sequence CPNGHEQTVDEIEPRSFSFNNPFGACPEC. ABC transporter domains are found at residues 360 to 639 and 659 to 988; these read WSLG…TRSV and PEKG…RFLA. Position 692–699 (692–699) interacts with ATP; the sequence is GVSGSGKS. Residues 791–817 form a C4-type zinc finger; it reads CEACAGDGTLKIEMNFLPDVYVPCEVC.

Belongs to the ABC transporter superfamily. UvrA family. Forms a heterotetramer with UvrB during the search for lesions.

It is found in the cytoplasm. The UvrABC repair system catalyzes the recognition and processing of DNA lesions. UvrA is an ATPase and a DNA-binding protein. A damage recognition complex composed of 2 UvrA and 2 UvrB subunits scans DNA for abnormalities. When the presence of a lesion has been verified by UvrB, the UvrA molecules dissociate. In Micrococcus luteus (Micrococcus lysodeikticus), this protein is UvrABC system protein A.